A 673-amino-acid chain; its full sequence is MKMTRLYPLALGGLLLPAIANAQTSQQDESTLEVTASKQSSRSASANNVSSTVVSAPELSDAGVTASDKLPRVLPGLNIENSGNMLFSTISLRGVSSAQDFYNPAVTLYVDGVPQLSTNTIQALTDVQSVELLRGPQGTLYGKSAQGGIINIVTQQPDSTPRGYIEGGVSSRDSYRSKFNLSGPIQDGLLYGSVTLLRQVDDGDMINPATGSDDLGGTRASIGNVKLRLAPDDQPWEMGFAASRECTRATQDAYVGWNDIKGRKLSLSDGSPDPYMRRCTDSQTLSGKYTTDDWVFNLISAWQQQHYSRTFPSGSLIVNMPQRWNQDVQELRAATLGDARTVDMVFGLYRQNTREKLNSAYDMPTMPYLSSTGYTTAETLAAYSDLTWHLTDRFDIGGGVRFSHDKSSTQYHGSMLGNPFGDQGKSNDDQVLGQLSAGYMLTDDWRVYTRIAQGYKPSGYNIVPTAGLDAKPFVAEKSINYELGTRYETADVTLQAATFYTHTKDMQLYSGPVGMQTLSNAGKADATGVELEAKWRFAPGWSWDINGNVIRSEFTNDSELYHGNRVPFVPRYGAGSSVNGVIDTRYGALMPRLAVNLVGPHYFDGDNQLRQGTYATLDSSLGWQATERINISVHVDNLFDRRYRTYGYMNGSSAVAQVNMGRTVGINTRIDFF.

The first 22 residues, 1 to 22 (MKMTRLYPLALGGLLLPAIANA), serve as a signal peptide directing secretion. A TonB box motif is present at residues 30–37 (STLEVTAS). Positions 41–155 (SRSASANNVS…QGGIINIVTQ (115 aa)) constitute a TBDR plug domain. The TBDR beta-barrel domain occupies 160-672 (TPRGYIEGGV…TVGINTRIDF (513 aa)). Positions 657–673 (QVNMGRTVGINTRIDFF) match the TonB C-terminal box motif.

This sequence belongs to the TonB-dependent receptor family.

The protein resides in the cell outer membrane. In terms of biological role, receptor for the bacteriocin pesticin and for the siderophore yersiniabactin. This is Pesticin receptor (fyuA) from Yersinia enterocolitica serotype O:8 / biotype 1B (strain NCTC 13174 / 8081).